The following is a 101-amino-acid chain: Phosphoribosyl-AMP cyclohydrolase (101 aa).

Residue aspartate 71 coordinates Mg(2+). A Zn(2+)-binding site is contributed by cysteine 72. Residues aspartate 73 and aspartate 75 each contribute to the Mg(2+) site. Zn(2+) is bound by residues cysteine 88 and cysteine 95.

This sequence belongs to the PRA-CH family. Homodimer. Mg(2+) is required as a cofactor. It depends on Zn(2+) as a cofactor.

Its subcellular location is the cytoplasm. The catalysed reaction is 1-(5-phospho-beta-D-ribosyl)-5'-AMP + H2O = 1-(5-phospho-beta-D-ribosyl)-5-[(5-phospho-beta-D-ribosylamino)methylideneamino]imidazole-4-carboxamide. The protein operates within amino-acid biosynthesis; L-histidine biosynthesis; L-histidine from 5-phospho-alpha-D-ribose 1-diphosphate: step 3/9. Functionally, catalyzes the hydrolysis of the adenine ring of phosphoribosyl-AMP. This is Phosphoribosyl-AMP cyclohydrolase from Bacillus cereus (strain ATCC 14579 / DSM 31 / CCUG 7414 / JCM 2152 / NBRC 15305 / NCIMB 9373 / NCTC 2599 / NRRL B-3711).